Consider the following 520-residue polypeptide: Mitogen-activated protein kinase kinase 3 (520 aa).

Ser69 is subject to Phosphoserine. Residues 83–339 (MRVFGAIGSG…ADQLLSHPFI (257 aa)) form the Protein kinase domain. ATP contacts are provided by residues 89-97 (IGSGASSVV) and Lys112. The active-site Proton acceptor is the Asp207. A Phosphoserine modification is found at Ser235. A phosphothreonine mark is found at Thr241 and Thr245. One can recognise an NTF2 domain in the interval 366 to 516 (LADMLTIHYY…YFLAKQELYI (151 aa)).

The protein belongs to the protein kinase superfamily. STE Ser/Thr protein kinase family. MAP kinase kinase subfamily. As to quaternary structure, interacts with MPK1, MPK2 and MPK7. Interacts with P.syringae type III effector HopF2. Interacts with MPK14. Binds to MAPKKK17 and MAPKKK18. Binds to MAPKKK20. Phosphorylation at Ser-235 and Thr-241 by MAP kinase kinase kinases positively regulates kinase activity. Phosphorylated by MAPKKK20. In terms of tissue distribution, mostly expressed in leaves, and, to a lower extent, in roots, seedlings, flower buds, flowers and siliques.

The protein localises to the nucleus. It localises to the cytoplasm. The catalysed reaction is L-seryl-[protein] + ATP = O-phospho-L-seryl-[protein] + ADP + H(+). It carries out the reaction L-threonyl-[protein] + ATP = O-phospho-L-threonyl-[protein] + ADP + H(+). The enzyme catalyses L-tyrosyl-[protein] + ATP = O-phospho-L-tyrosyl-[protein] + ADP + H(+). Its function is as follows. MKK3-MPK6 module plays an important role in the jasmonate signal transduction pathway through the negative regulation of MYC2/JIN1 expression. Activates by phosphorylation the downstream MPK6, MPK7 and MPK8. MKK3-MPK7 module acts as a positive regulator of PR1 gene expression. MKK3-MPK8 module negatively regulates ROS accumulation through controlling expression of the RBOHD gene. Component of the abscisic acid (ABA) signaling pathway that may act as ABA signal transducer in the context of abiotic stresses. Activator of the C group MAP kinases. Activates MPK7 in response to ABA. Mitogen-activated protein kinase (MAPK) that is specifically regulated by MAPKKK20 and mediates signaling that regulates cortical microtubule functions. This chain is Mitogen-activated protein kinase kinase 3, found in Arabidopsis thaliana (Mouse-ear cress).